Consider the following 484-residue polypeptide: MTKEQQLAERIIAAVGGMDNIDSVMNCMTRVRIKVLDENKVDDQELRHIDGVMGVIHDERIQVVVGPGTVNKVANHMAELSGVKLGDPIPHHHNDSEKMDYKSYAADKAKANKEAHKAKQKNGKLNKVLKSIANIFIPLIPAFIGAGLIGGIAAVLSNLMVAGYISGAWITQLITVFNVIKDGMLAYLAIFTGINAAKEFGATPGLGGVIGGTTLLTGIAGKNILMNVFTGEPLQPGQGGIIGVIFAVWILSIVEKRLHKIVPNAIDIIVTPTIALLIVGLLTIFIFMPLAGFVSDSLVSVVNGIISIGGVFSGFIIGASFLPLVMLGLHHIFTPIHIEMINQSGATYLLPIAAMAGAGQVGAALALWVRCKRNTTLRNTLKGALPVGFLGIGEPLIYGVTLPLGRPFLTACIGGGIGGAVIGGIGHIGAKAIGPSGVSLLPLISDNMYLGYIAGLLAAYAGGFVCTYLFGTTKAMRQTDLLGD.

Positions 5-87 constitute a PTS EIIB type-1 domain; that stretch reads QQLAERIIAA…AELSGVKLGD (83 aa). The Phosphocysteine intermediate; for EIIB activity role is filled by Cys-27. The PTS EIIC type-1 domain maps to 130–484; sequence KSIANIFIPL…AMRQTDLLGD (355 aa). Helical transmembrane passes span 135–155, 160–180, 200–220, 234–254, 274–294, 305–325, 349–369, 384–404, 408–428, and 450–470; these read IFIP…IAAV, MVAG…FNVI, FGAT…TGIA, LQPG…LSIV, IALL…AGFV, IISI…LPLV, LLPI…ALWV, ALPV…TLPL, FLTA…IGHI, and LGYI…TYLF.

It localises to the cell membrane. It carries out the reaction N-acetyl-beta-D-muramate-(1-&gt;4)-N-acetyl-D-glucosamine(out) + N(pros)-phospho-L-histidyl-[protein] = 6-phospho-N-acetyl-beta-D-muramate-(1-&gt;4)-N-acetyl-D-glucosamine(in) + L-histidyl-[protein]. It participates in cell wall biogenesis; peptidoglycan recycling. Functionally, the phosphoenolpyruvate-dependent sugar phosphotransferase system (sugar PTS), a major carbohydrate active transport system, catalyzes the phosphorylation of incoming sugar substrates concomitantly with their translocation across the cell membrane. This system is involved in the uptake and phosphorylation of MurNAc-GlcNAc, the principle peptidoglycan turnover product of S.aureus, yielding cytoplasmic MurNAc 6P-GlcNAc. This is PTS system MurNAc-GlcNAc-specific EIIBC component from Staphylococcus aureus (strain Mu50 / ATCC 700699).